We begin with the raw amino-acid sequence, 777 residues long: Subtilisin-like protease SBT3.3 (777 aa).

The signal sequence occupies residues 1 to 24; that stretch reads MRSFRSSILLVLLSLITVLNATRA. A propeptide spans 25 to 111 (removed in mature form); it reads RSETESKVHI…VIPDGFHELA (87 aa). In terms of domain architecture, Inhibitor I9 spans 32 to 109; the sequence is VHIVYLGEKK…VHVIPDGFHE (78 aa). In terms of domain architecture, Peptidase S8 spans 115–624; the sequence is TWEYLGLSSA…GGIVNPEKAA (510 aa). Residue Asn131 is glycosylated (N-linked (GlcNAc...) asparagine). The active-site Charge relay system is Asp145. An N-linked (GlcNAc...) asparagine glycan is attached at Asn204. Residue His220 is the Charge relay system of the active site. N-linked (GlcNAc...) asparagine glycosylation is found at Asn235, Asn397, Asn412, Asn508, and Asn540. The 79-residue stretch at 403-481 folds into the PA domain; that stretch reads VCESLNLNPN…ELGTDILSYI (79 aa). Catalysis depends on Ser555, which acts as the Charge relay system. Residue Asn647 is glycosylated (N-linked (GlcNAc...) asparagine).

It belongs to the peptidase S8 family.

Its subcellular location is the secreted. It is found in the extracellular space. It localises to the extracellular matrix. In terms of biological role, serine protease that plays a role in the control of the establishment of immune priming and systemic induced resistance. This is Subtilisin-like protease SBT3.3 from Arabidopsis thaliana (Mouse-ear cress).